Here is a 372-residue protein sequence, read N- to C-terminus: Flagellar P-ring protein (372 aa).

Residues 1-29 form the signal peptide; it reads MPARPIPVPAFALALALAAALAVPAPAAA.

This sequence belongs to the FlgI family. The basal body constitutes a major portion of the flagellar organelle and consists of four rings (L,P,S, and M) mounted on a central rod.

The protein resides in the periplasm. It is found in the bacterial flagellum basal body. Its function is as follows. Assembles around the rod to form the L-ring and probably protects the motor/basal body from shearing forces during rotation. In Anaeromyxobacter dehalogenans (strain 2CP-1 / ATCC BAA-258), this protein is Flagellar P-ring protein.